We begin with the raw amino-acid sequence, 128 residues long: uncharacterized protein (128 aa).

Disordered regions lie at residues 62–83 (LNPS…SPRV) and 101–128 (FAAS…RYQP). Residues 101-114 (FAASSSSTAPVTVT) are compositionally biased toward low complexity.

The protein localises to the cytoplasm. It localises to the nucleus. This is an uncharacterized protein from Saccharomyces cerevisiae (strain ATCC 204508 / S288c) (Baker's yeast).